A 113-amino-acid polypeptide reads, in one-letter code: Large ribosomal subunit protein bL17 (113 aa).

The protein belongs to the bacterial ribosomal protein bL17 family. As to quaternary structure, part of the 50S ribosomal subunit. Contacts protein L32.

The sequence is that of Large ribosomal subunit protein bL17 from Clostridioides difficile (strain 630) (Peptoclostridium difficile).